The sequence spans 43 residues: Protein PsbN (43 aa).

A helical transmembrane segment spans residues 4–24 (AIVLIISVGAALVAVTGYGIY).

It belongs to the PsbN family.

It is found in the cellular thylakoid membrane. Its function is as follows. May play a role in photosystem I and II biogenesis. This chain is Protein PsbN, found in Trichormus variabilis (strain ATCC 29413 / PCC 7937) (Anabaena variabilis).